Reading from the N-terminus, the 346-residue chain is Low-temperature-induced cysteine proteinase (346 aa).

Positions 1–17 are cleaved as a propeptide — activation peptide; the sequence is KLSKNKSDRYLPKVGDS. Disulfide bonds link cysteine 39–cysteine 81, cysteine 73–cysteine 114, cysteine 172–cysteine 223, cysteine 256–cysteine 268, and cysteine 262–cysteine 283. Cysteine 42 is an active-site residue. Catalysis depends on residues histidine 178 and asparagine 198. A glycan (N-linked (GlcNAc...) asparagine) is linked at asparagine 215. Residues 238–346 constitute a propeptide, removed in mature form; it reads NPPKPAPSPP…FGNGGKKSSS (109 aa).

Belongs to the peptidase C1 family.

The sequence is that of Low-temperature-induced cysteine proteinase from Solanum lycopersicum (Tomato).